The primary structure comprises 259 residues: Thiazole synthase (259 aa).

Lys-95 serves as the catalytic Schiff-base intermediate with DXP. Residues Gly-156, 182–183 (AG), and 204–205 (NT) each bind 1-deoxy-D-xylulose 5-phosphate.

The protein belongs to the ThiG family. In terms of assembly, homotetramer. Forms heterodimers with either ThiH or ThiS.

It is found in the cytoplasm. It carries out the reaction [ThiS sulfur-carrier protein]-C-terminal-Gly-aminoethanethioate + 2-iminoacetate + 1-deoxy-D-xylulose 5-phosphate = [ThiS sulfur-carrier protein]-C-terminal Gly-Gly + 2-[(2R,5Z)-2-carboxy-4-methylthiazol-5(2H)-ylidene]ethyl phosphate + 2 H2O + H(+). The protein operates within cofactor biosynthesis; thiamine diphosphate biosynthesis. Catalyzes the rearrangement of 1-deoxy-D-xylulose 5-phosphate (DXP) to produce the thiazole phosphate moiety of thiamine. Sulfur is provided by the thiocarboxylate moiety of the carrier protein ThiS. In vitro, sulfur can be provided by H(2)S. The polypeptide is Thiazole synthase (Serratia proteamaculans (strain 568)).